The chain runs to 1128 residues: Phytochrome A (1128 aa).

Low complexity predominate over residues 1 to 21; sequence MSSSRPTQCSSSSSRTRQSSR. The tract at residues 1–24 is disordered; the sequence is MSSSRPTQCSSSSSRTRQSSRARI. Residues 219–404 enclose the GAF domain; that stretch reads SMEVLCNTVV…VFAVHVNKEF (186 aa). Residue cysteine 324 coordinates phytochromobilin. 2 consecutive PAS domains span residues 620–690 and 750–834; these read VTSE…LQGK and VEGD…LAGD. The region spanning 904-1124 is the Histidine kinase domain; it reads YMRHAINNPL…TFILSVELAS (221 aa).

This sequence belongs to the phytochrome family. Homodimer. Post-translationally, contains one covalently linked phytochromobilin chromophore.

Regulatory photoreceptor which exists in two forms that are reversibly interconvertible by light: the Pr form that absorbs maximally in the red region of the spectrum and the Pfr form that absorbs maximally in the far-red region. Photoconversion of Pr to Pfr induces an array of morphogenic responses, whereas reconversion of Pfr to Pr cancels the induction of those responses. Pfr controls the expression of a number of nuclear genes including those encoding the small subunit of ribulose-bisphosphate carboxylase, chlorophyll A/B binding protein, protochlorophyllide reductase, rRNA, etc. It also controls the expression of its own gene(s) in a negative feedback fashion. The chain is Phytochrome A (PHYA) from Oryza sativa subsp. indica (Rice).